The primary structure comprises 920 residues: DNA ligase (920 aa).

NAD(+) is bound by residues 90–94, 139–140, and Glu-173; these read DAAYD and SL. The active-site N6-AMP-lysine intermediate is the Lys-175. NAD(+) contacts are provided by Arg-196, Glu-235, Lys-360, and Lys-384. 4 residues coordinate Zn(2+): Cys-481, Cys-484, Cys-500, and Cys-506. The interval 662-691 is disordered; it reads GEAAIESAETQGDTASETTGAPTGAEAPLG. A compositionally biased stretch (polar residues) spans 669–682; that stretch reads AETQGDTASETTGA. A BRCT domain is found at 839–920; it reads SLPQTLAGKT…FAQLLATGTI (82 aa).

The protein belongs to the NAD-dependent DNA ligase family. LigA subfamily. Mg(2+) serves as cofactor. Requires Mn(2+) as cofactor.

It catalyses the reaction NAD(+) + (deoxyribonucleotide)n-3'-hydroxyl + 5'-phospho-(deoxyribonucleotide)m = (deoxyribonucleotide)n+m + AMP + beta-nicotinamide D-nucleotide.. Its function is as follows. DNA ligase that catalyzes the formation of phosphodiester linkages between 5'-phosphoryl and 3'-hydroxyl groups in double-stranded DNA using NAD as a coenzyme and as the energy source for the reaction. It is essential for DNA replication and repair of damaged DNA. This Bifidobacterium longum (strain DJO10A) protein is DNA ligase.